The primary structure comprises 292 residues: MATLHFTKGQGTGNDFVLYADPDGTLPLSAGQIAEICDRHFGVGADGVIRAVRSKRLPEGAEALADDEAAEWFMDYYNADGSAAEMCGNGIRVYVRYLIESRLVQLADGDTLPIGTRSGVRDVQRTLSGFQVDLGRWRLAGGEPLVRAKELPVARLGLGIDLGNPHVVVALADESELESADLTYIPHLEPAPQGGANVEFVVPHEPLVKDGVGRIRMRVHERGSGETLSCGTGAAAAALAVRHWAGENAPGQWWVDVPGGTVGVRMFPTEDGEHVALSGPAELVYTGALELA.

Substrate contacts are provided by Asn14 and Asn78. The active-site Proton donor is Cys87. Substrate-binding positions include 88-89 (GN), Asn164, Asn197, and 221-222 (ER). Cys230 (proton acceptor) is an active-site residue. 231 to 232 (GT) contacts substrate.

This sequence belongs to the diaminopimelate epimerase family. As to quaternary structure, homodimer.

The protein localises to the cytoplasm. It catalyses the reaction (2S,6S)-2,6-diaminopimelate = meso-2,6-diaminopimelate. Its pathway is amino-acid biosynthesis; L-lysine biosynthesis via DAP pathway; DL-2,6-diaminopimelate from LL-2,6-diaminopimelate: step 1/1. In terms of biological role, catalyzes the stereoinversion of LL-2,6-diaminopimelate (L,L-DAP) to meso-diaminopimelate (meso-DAP), a precursor of L-lysine and an essential component of the bacterial peptidoglycan. This Leifsonia xyli subsp. xyli (strain CTCB07) protein is Diaminopimelate epimerase.